The chain runs to 427 residues: Glutamate-1-semialdehyde 2,1-aminomutase (427 aa).

N6-(pyridoxal phosphate)lysine is present on Lys264.

This sequence belongs to the class-III pyridoxal-phosphate-dependent aminotransferase family. HemL subfamily. Homodimer. It depends on pyridoxal 5'-phosphate as a cofactor.

It localises to the cytoplasm. It carries out the reaction (S)-4-amino-5-oxopentanoate = 5-aminolevulinate. Its pathway is porphyrin-containing compound metabolism; protoporphyrin-IX biosynthesis; 5-aminolevulinate from L-glutamyl-tRNA(Glu): step 2/2. The sequence is that of Glutamate-1-semialdehyde 2,1-aminomutase from Clostridium botulinum (strain Alaska E43 / Type E3).